The sequence spans 735 residues: Probable E3 ubiquitin-protein ligase MID2 (735 aa).

An RING-type zinc finger spans residues 30–80 (CPICLELFEDPLLLPCAHSLCFSCAHRILVSSCSSGESIEPITAFQCPTCR). Residues 137-184 (IACQFCEQDPPRDAVKTCITCEVSYCDRCLRATHPNKKPFTSHRLVEP) form a B box-type 1; degenerate zinc finger. The B box-type 2 zinc finger occupies 190–232 (LRGITCLDHENEKVNMYCVSDDQLICALCKLVGRHRDHQVASL). Positions 195, 198, 218, and 224 each coordinate Zn(2+). Residues 233–301 (NDRFEKLKQT…IIQQRKQMIA (69 aa)) are a coiled coil. The 60-residue stretch at 340–399 (LKENDQARFLQSAKNIAERVAMATASSQVLIPDINFNDAFENFALDFSREKKLLEGLDYL) folds into the COS domain. Positions 398–531 (YLTAPNPPSI…RNSEPTRLKT (134 aa)) constitute a Fibronectin type-III domain. The region spanning 516–709 (INQAGSRNSE…ILSGLPAPDF (194 aa)) is the B30.2/SPRY domain.

Belongs to the TRIM/RBCC family. As to quaternary structure, homodimer or heterodimer with MID1. Interacts with IGBP1. Phosphorylated on serine and threonine residues. Low level in fetal kidney and lung, and in adult prostate, ovary and small intestine.

The protein resides in the cytoplasm. It localises to the cytoskeleton. The catalysed reaction is S-ubiquitinyl-[E2 ubiquitin-conjugating enzyme]-L-cysteine + [acceptor protein]-L-lysine = [E2 ubiquitin-conjugating enzyme]-L-cysteine + N(6)-ubiquitinyl-[acceptor protein]-L-lysine.. It functions in the pathway protein modification; protein ubiquitination. Functionally, E3 ubiquitin ligase that plays a role in microtubule stabilization. Mediates the 'Lys-48'-linked polyubiquitination of LRRK2 to drive its localization to microtubules and its proteasomal degradation in neurons. This ubiquitination inhibits LRRK2 kinase activation by RAB29. The sequence is that of Probable E3 ubiquitin-protein ligase MID2 (MID2) from Homo sapiens (Human).